Consider the following 1388-residue polypeptide: DNA-directed RNA polymerase subunit beta (1388 aa).

It belongs to the RNA polymerase beta chain family. The RNAP catalytic core consists of 2 alpha, 1 beta, 1 beta' and 1 omega subunit. When a sigma factor is associated with the core the holoenzyme is formed, which can initiate transcription.

It catalyses the reaction RNA(n) + a ribonucleoside 5'-triphosphate = RNA(n+1) + diphosphate. Its function is as follows. DNA-dependent RNA polymerase catalyzes the transcription of DNA into RNA using the four ribonucleoside triphosphates as substrates. The sequence is that of DNA-directed RNA polymerase subunit beta from Xylella fastidiosa (strain 9a5c).